We begin with the raw amino-acid sequence, 878 residues long: Multiple C2 and transmembrane domain-containing protein 2 (878 aa).

2 disordered regions span residues 20-40 (LINL…DLRV) and 143-178 (KPSL…ESTL). A compositionally biased stretch (basic and acidic residues) spans 149 to 161 (DAPEEHDKTHGND). 3 C2 domains span residues 177-292 (TLGE…EHIL), 334-452 (SKSS…CLEL), and 486-607 (PSER…CYVL). Ca(2+) is bound by residues Asp-210, Asp-216, Asp-263, Asp-265, and Asp-270. Ca(2+) is bound by residues Asp-525, Asp-531, Asp-577, Asp-579, and Asp-585. A helical membrane pass occupies residues 694–714 (FVVFLVTVWNFELYMIPLALL). Residues 728 to 752 (KASSTQDSQESTDVEEEGKEEEKES) form a disordered region. Over residues 737–746 (ESTDVEEEGK) the composition is skewed to acidic residues. Residues 794 to 814 (PFLSLLACLILAITTVILYFI) traverse the membrane as a helical segment.

It belongs to the MCTP family. Requires Ca(2+) as cofactor.

The protein resides in the membrane. Functionally, might play a role in the development of cardiac outflow tract. The chain is Multiple C2 and transmembrane domain-containing protein 2 (Mctp2) from Mus musculus (Mouse).